A 750-amino-acid chain; its full sequence is Photosystem I P700 chlorophyll a apoprotein A1 (750 aa).

A run of 8 helical transmembrane segments spans residues 70–93, 156–179, 195–219, 291–309, 346–369, 385–411, 433–455, and 531–549; these read IFSAHFGQLSIIFLWLSGMYFHGA, LYCTAIGGLVFAALMLFAGWFHYH, LNHHLAGLLGLGSLSWAGHQVHVSL, IAHHHLAIAILFLIAGHMY, WHAQLSINLAMLGSLTIIVAHHMY, LSLFTHHMWIGGFLIVGAAAHAAIFMV, AIISHLNWVCIFLGFHSFGLYIH, and FLVHHIHAFTIHVTVLILL. [4Fe-4S] cluster-binding residues include Cys573 and Cys582. A run of 2 helical transmembrane segments spans residues 589–610 and 664–686; these read HVFLGLFWMYNAISVVIFHFSW and LSAYGLFFLGAHFVWAFSLMFLF. Position 675 (His675) interacts with chlorophyll a'. Chlorophyll a is bound by residues Met683 and Tyr691. Trp692 is a phylloquinone binding site. The chain crosses the membrane as a helical span at residues 724–744; that stretch reads AVGVTHYLLGGIATTWAFFLA.

This sequence belongs to the PsaA/PsaB family. The PsaA/B heterodimer binds the P700 chlorophyll special pair and subsequent electron acceptors. PSI consists of a core antenna complex that captures photons, and an electron transfer chain that converts photonic excitation into a charge separation. The eukaryotic PSI reaction center is composed of at least 11 subunits. It depends on P700 is a chlorophyll a/chlorophyll a' dimer, A0 is one or more chlorophyll a, A1 is one or both phylloquinones and FX is a shared 4Fe-4S iron-sulfur center. as a cofactor.

It localises to the plastid. It is found in the chloroplast thylakoid membrane. It carries out the reaction reduced [plastocyanin] + hnu + oxidized [2Fe-2S]-[ferredoxin] = oxidized [plastocyanin] + reduced [2Fe-2S]-[ferredoxin]. PsaA and PsaB bind P700, the primary electron donor of photosystem I (PSI), as well as the electron acceptors A0, A1 and FX. PSI is a plastocyanin-ferredoxin oxidoreductase, converting photonic excitation into a charge separation, which transfers an electron from the donor P700 chlorophyll pair to the spectroscopically characterized acceptors A0, A1, FX, FA and FB in turn. Oxidized P700 is reduced on the lumenal side of the thylakoid membrane by plastocyanin. The polypeptide is Photosystem I P700 chlorophyll a apoprotein A1 (Lotus japonicus (Lotus corniculatus var. japonicus)).